The primary structure comprises 139 residues: Actin-depolymerizing factor 1 (139 aa).

The region spanning 5–139 (ASGMAVHDDC…GLDVIQSRAN (135 aa)) is the ADF-H domain.

It belongs to the actin-binding proteins ADF family.

Functionally, actin-depolymerizing protein. Severs actin filaments (F-actin) and binds to actin monomers. The chain is Actin-depolymerizing factor 1 (ADF1) from Petunia hybrida (Petunia).